The sequence spans 333 residues: Protein FLAP1 homolog A (333 aa).

The chain crosses the membrane as a helical span at residues Val26–Ala46. Residues Ile53–Gly74 are disordered. The segment covering Phe58–Gly70 has biased composition (low complexity). A run of 2 helical transmembrane segments spans residues Ile92–Ile112 and Gly261–Val281.

Belongs to the FLAP family.

It is found in the cellular thylakoid membrane. The protein localises to the cell inner membrane. Essential for photosynthetic growth under fluctuating light by modulating PxcA- and PxcL-dependent intracellular pH regulation via proton transport (e.g. transient pH reduction upon transition from dark to light followed by an increase in the light until light-to-dark shift). This is Protein FLAP1 homolog A from Synechocystis sp. (strain ATCC 27184 / PCC 6803 / Kazusa).